A 246-amino-acid chain; its full sequence is Carboxylesterase (246 aa).

Ser93 acts as the Nucleophile in catalysis. Catalysis depends on charge relay system residues Asp192 and His222.

Belongs to the lipase/esterase LIP3/BchO family. Homodimer.

The catalysed reaction is a carboxylic ester + H2O = an alcohol + a carboxylate + H(+). Involved in the detoxification of xenobiotics. Shows maximal activity with C6 substrates, with gradually decreasing activity from C8 to C12 substrates. No activity for higher chain length substrates acids rather than long-chain ones. The protein is Carboxylesterase (est) of Bacillus subtilis (strain 168).